The following is a 223-amino-acid chain: MADAATISKLEEGFKKLQGATDCKDVFDQLKQTDKHPNKDFGDVNQFVNVDPDGKFVISTRVRLIDDHFLFKEGDRFLQAANACRYWPSGRGIFHNDKKIISMQMGGDLGQVYRRLVSAVNEIEKRVPFSHHDRLGFLTFCPTNLGTTVRASVHIKLPKXEKLEEVAGKYSLQVRGTRGEHTEAEGGVYDISNKRRMGLTEFQAVKEMQDGILELIKIEKEMQ.

One can recognise a Phosphagen kinase C-terminal domain in the interval 56-222; that stretch reads FVISTRVRLI…LELIKIEKEM (167 aa). ATP-binding positions include 59–63 and histidine 68; that span reads STRVR. An L-arginine-binding site is contributed by cysteine 141. Residues 150-154 and 175-180 each bind ATP; these read RASVH and RGTRGE. Glutamate 180 is a binding site for L-arginine.

The protein belongs to the ATP:guanido phosphotransferase family.

It carries out the reaction L-arginine + ATP = N(omega)-phospho-L-arginine + ADP + H(+). The polypeptide is Arginine kinase (Chionoecetes opilio (Atlantic snow crab)).